A 154-amino-acid chain; its full sequence is Large ribosomal subunit protein uL30 (154 aa).

This sequence belongs to the universal ribosomal protein uL30 family. In terms of assembly, part of the 50S ribosomal subunit.

The protein is Large ribosomal subunit protein uL30 of Methanocaldococcus jannaschii (strain ATCC 43067 / DSM 2661 / JAL-1 / JCM 10045 / NBRC 100440) (Methanococcus jannaschii).